We begin with the raw amino-acid sequence, 353 residues long: Photosystem II protein D1 (353 aa).

Position 2 is an N-acetylthreonine (Thr2). Thr2 is modified (phosphothreonine). 3 helical membrane-spanning segments follow: residues 29–46 (YIGW…TATS), 118–133 (HFLL…EWEL), and 142–156 (WIAV…AATA). His118 serves as a coordination point for chlorophyll a. Tyr126 is a binding site for pheophytin a. 2 residues coordinate [CaMn4O5] cluster: Asp170 and Glu189. A helical transmembrane segment spans residues 197 to 218 (FHMLGVAGVFGGSLFSAMHGSL). His198 contacts chlorophyll a. A quinone is bound by residues His215 and 264 to 265 (SF). Fe cation is bound at residue His215. His272 lines the Fe cation pocket. A helical membrane pass occupies residues 274–288 (FLAAWPVVGIWFTAL). [CaMn4O5] cluster contacts are provided by His332, Glu333, Asp342, and Ala344. Positions 345 to 353 (AVEAPSTNG) are excised as a propeptide.

This sequence belongs to the reaction center PufL/M/PsbA/D family. In terms of assembly, PSII is composed of 1 copy each of membrane proteins PsbA, PsbB, PsbC, PsbD, PsbE, PsbF, PsbH, PsbI, PsbJ, PsbK, PsbL, PsbM, PsbT, PsbX, PsbY, PsbZ, Psb30/Ycf12, at least 3 peripheral proteins of the oxygen-evolving complex and a large number of cofactors. It forms dimeric complexes. The D1/D2 heterodimer binds P680, chlorophylls that are the primary electron donor of PSII, and subsequent electron acceptors. It shares a non-heme iron and each subunit binds pheophytin, quinone, additional chlorophylls, carotenoids and lipids. D1 provides most of the ligands for the Mn4-Ca-O5 cluster of the oxygen-evolving complex (OEC). There is also a Cl(-1) ion associated with D1 and D2, which is required for oxygen evolution. The PSII complex binds additional chlorophylls, carotenoids and specific lipids. serves as cofactor. Post-translationally, tyr-161 forms a radical intermediate that is referred to as redox-active TyrZ, YZ or Y-Z. In terms of processing, C-terminally processed by CTPA; processing is essential to allow assembly of the oxygen-evolving complex and thus photosynthetic growth.

Its subcellular location is the plastid. The protein localises to the chloroplast thylakoid membrane. The catalysed reaction is 2 a plastoquinone + 4 hnu + 2 H2O = 2 a plastoquinol + O2. In terms of biological role, photosystem II (PSII) is a light-driven water:plastoquinone oxidoreductase that uses light energy to abstract electrons from H(2)O, generating O(2) and a proton gradient subsequently used for ATP formation. It consists of a core antenna complex that captures photons, and an electron transfer chain that converts photonic excitation into a charge separation. The D1/D2 (PsbA/PsbD) reaction center heterodimer binds P680, the primary electron donor of PSII as well as several subsequent electron acceptors. The protein is Photosystem II protein D1 of Ceratophyllum demersum (Rigid hornwort).